Consider the following 322-residue polypeptide: 2-methylene-furan-3-one reductase (322 aa).

Residues Lys59, 174–175, 197–200, Tyr215, Ile253, 264–266, and 311–312 contribute to the NADP(+) site; these read GV, STKK, FVL, and RA. Lys59 is a binding site for substrate.

Belongs to the zinc-containing alcohol dehydrogenase family. Quinone oxidoreductase subfamily. In terms of assembly, monomer.

The catalysed reaction is 4-hydroxy-2,5-dimethyl-furan-3(2H)-one + NADP(+) = 4-hydroxy-5-methyl-2-methylenefuran-3(2H)-one + NADPH + H(+). Enone oxidoreductase involved in the biosynthesis of 4-hydroxy-2,5-dimethyl-3(2H)-furanone (HDMF or furaneol), the key flavor compound in strawberries. The polypeptide is 2-methylene-furan-3-one reductase (EO) (Fragaria vesca (Woodland strawberry)).